We begin with the raw amino-acid sequence, 203 residues long: Probable cytochrome c oxidase subunit 3 (203 aa).

Transmembrane regions (helical) follow at residues 30 to 50 (IIWLSSELMFFAGLFAMYFVA), 69 to 89 (LAVPVTAVLVASSFTCQMGVF), 102 to 122 (WYFITLLMGAFFVAGQGYEYY), 142 to 162 (ITTGFHGLHVIGGLIAFVFLL), and 179 to 199 (IVVSYYWHFVDIVWIGLFATI).

The protein belongs to the cytochrome c oxidase subunit 3 family.

It localises to the cell membrane. The catalysed reaction is 4 Fe(II)-[cytochrome c] + O2 + 8 H(+)(in) = 4 Fe(III)-[cytochrome c] + 2 H2O + 4 H(+)(out). The sequence is that of Probable cytochrome c oxidase subunit 3 (ctaE) from Nocardia farcinica (strain IFM 10152).